Here is a 44-residue protein sequence, read N- to C-terminus: Photosystem I reaction center subunit IX 2 (44 aa).

A helical transmembrane segment spans residues 13–35; sequence APVLATLWLSSTAVILIGVNSYF.

This sequence belongs to the PsaJ family.

The protein localises to the cellular thylakoid membrane. Functionally, may help in the organization of the PsaE and PsaF subunits. The polypeptide is Photosystem I reaction center subunit IX 2 (psaJ2) (Prochlorococcus marinus (strain NATL2A)).